The chain runs to 88 residues: Small ribosomal subunit protein bS20 (88 aa).

It belongs to the bacterial ribosomal protein bS20 family.

Binds directly to 16S ribosomal RNA. The protein is Small ribosomal subunit protein bS20 of Methylocella silvestris (strain DSM 15510 / CIP 108128 / LMG 27833 / NCIMB 13906 / BL2).